Here is a 121-residue protein sequence, read N- to C-terminus: Small ribosomal subunit protein uS13 (121 aa).

A disordered region spans residues 91-121; the sequence is HRKGLPMRGQRTRTNARTRKGPRKAGVALKK.

It belongs to the universal ribosomal protein uS13 family. In terms of assembly, part of the 30S ribosomal subunit. Forms a loose heterodimer with protein S19. Forms two bridges to the 50S subunit in the 70S ribosome.

In terms of biological role, located at the top of the head of the 30S subunit, it contacts several helices of the 16S rRNA. In the 70S ribosome it contacts the 23S rRNA (bridge B1a) and protein L5 of the 50S subunit (bridge B1b), connecting the 2 subunits; these bridges are implicated in subunit movement. Contacts the tRNAs in the A and P-sites. This is Small ribosomal subunit protein uS13 from Cupriavidus necator (strain ATCC 17699 / DSM 428 / KCTC 22496 / NCIMB 10442 / H16 / Stanier 337) (Ralstonia eutropha).